The chain runs to 214 residues: Charged multivesicular body protein 2b (214 aa).

A coiled-coil region spans residues 25–55; it reads QRTITRDRAALEKQERQLELEIKKMAKTGNK. Residues 179–201 are disordered; that stretch reads AKAPSAARGLPSASTSKASTISD. Over residues 190-199 the composition is skewed to polar residues; the sequence is SASTSKASTI. Positions 202–212 match the MIT-interacting motif motif; the sequence is EEIERQLKALG.

Belongs to the SNF7 family. Probable core component of the endosomal sorting required for transport complex III (ESCRT-III). ESCRT-III components are thought to multimerize to form a flat lattice on the perimeter membrane of the endosome.

It is found in the cytoplasm. Its subcellular location is the cytosol. The protein resides in the late endosome membrane. Probable core component of the endosomal sorting required for transport complex III (ESCRT-III) which is involved in multivesicular bodies (MVBs) formation and sorting of endosomal cargo proteins into MVBs. MVBs contain intraluminal vesicles (ILVs) that are generated by invagination and scission from the limiting membrane of the endosome and mostly are delivered to lysosomes enabling degradation of membrane proteins, such as stimulated growth factor receptors, lysosomal enzymes and lipids. In Gallus gallus (Chicken), this protein is Charged multivesicular body protein 2b (CHMP2B).